Consider the following 208-residue polypeptide: uncharacterized protein (208 aa).

Residues 124–208 (KKTGSSNART…PSFGKYSSLA (85 aa)) are disordered. The span at 133–170 (TPDEGKKAKNAPEEEKVKTSGSEDAKGEESAVEGKEPE) shows a compositional bias: basic and acidic residues.

It is found in the golgi apparatus. This is an uncharacterized protein from Encephalitozoon cuniculi (strain GB-M1) (Microsporidian parasite).